Consider the following 644-residue polypeptide: Exoribonuclease 2 (644 aa).

The 328-residue stretch at 189–516 (REDLTALDFV…NHRLLKAVIK (328 aa)) folds into the RNB domain. Positions 561-643 (DTRFAAEIVD…ETRSIIARPV (83 aa)) constitute an S1 motif domain.

Belongs to the RNR ribonuclease family. RNase II subfamily.

It localises to the cytoplasm. It carries out the reaction Exonucleolytic cleavage in the 3'- to 5'-direction to yield nucleoside 5'-phosphates.. Involved in mRNA degradation. Hydrolyzes single-stranded polyribonucleotides processively in the 3' to 5' direction. The polypeptide is Exoribonuclease 2 (Escherichia coli O6:K15:H31 (strain 536 / UPEC)).